A 216-amino-acid polypeptide reads, in one-letter code: NKG2-D type II integral membrane protein (216 aa).

Residues 1 to 51 lie on the Cytoplasmic side of the membrane; it reads MGWIRGRRSRHSWEMSEFHNYNLDLKKSDFSTRWQKQRCPVVKSKCRENAS. The helical; Signal-anchor for type II membrane protein transmembrane segment at 52–72 threads the bilayer; it reads PFFFCCFIAVAMGIRFIIMVT. Over 73–216 the chain is Extracellular; that stretch reads IWSAVFLNSL…NTYICMQRTV (144 aa). 2 cysteine pairs are disulfide-bonded: C96–C105 and C99–C110. Residues 98–213 enclose the C-type lectin domain; it reads PCPKNWICYK…STPNTYICMQ (116 aa). Residues N115, N131, N163, and N202 are each glycosylated (N-linked (GlcNAc...) asparagine). 2 cysteine pairs are disulfide-bonded: C127–C211 and C189–C203.

As to quaternary structure, homodimer; disulfide-linked. Heterohexamer composed of two subunits of KLRK1 and four subunits of HCST/DAP10. Interacts (via transmembrane domain) with HCST/DAP10 (via transmembrane domain); the interaction is required for KLRK1 NK cell surface and induces NK cell-mediated cytotoxicity. Can form disulfide-bonded heterodimer with CD94. Interacts with CEACAM1; recruits PTPN6 that dephosphorylates VAV1. Natural killer cells.

The protein localises to the cell membrane. In terms of biological role, functions as an activating and costimulatory receptor involved in immunosurveillance upon binding to various cellular stress-inducible ligands displayed at the surface of autologous tumor cells and virus-infected cells. Provides both stimulatory and costimulatory innate immune responses on activated killer (NK) cells, leading to cytotoxic activity. Acts as a costimulatory receptor for T-cell receptor (TCR) in CD8(+) T-cell-mediated adaptive immune responses by amplifying T-cell activation. Stimulates perforin-mediated elimination of ligand-expressing tumor cells. Signaling involves calcium influx, culminating in the expression of TNF-alpha. Participates in NK cell-mediated bone marrow graft rejection. May play a regulatory role in differentiation and survival of NK cells. Binds to ligands belonging to various subfamilies of MHC class I-related glycoproteins. This chain is NKG2-D type II integral membrane protein (KLRK1), found in Pan troglodytes (Chimpanzee).